A 364-amino-acid polypeptide reads, in one-letter code: Aminomethyltransferase (364 aa).

This sequence belongs to the GcvT family. The glycine cleavage system is composed of four proteins: P, T, L and H.

The enzyme catalyses N(6)-[(R)-S(8)-aminomethyldihydrolipoyl]-L-lysyl-[protein] + (6S)-5,6,7,8-tetrahydrofolate = N(6)-[(R)-dihydrolipoyl]-L-lysyl-[protein] + (6R)-5,10-methylene-5,6,7,8-tetrahydrofolate + NH4(+). The glycine cleavage system catalyzes the degradation of glycine. The sequence is that of Aminomethyltransferase from Shewanella sp. (strain ANA-3).